Reading from the N-terminus, the 138-residue chain is uncharacterized protein (138 aa).

Residues 19–40 (ECKVSVISFFLLAFLLMAHIWL) traverse the membrane as a helical segment. Repeat copies occupy residues 94 to 106 (KGEIEGKEEKKEG), 107 to 119 (KGEIEGKEEKKEG), and 120 to 132 (KGEIEGKEEKKEV). The tract at residues 94–132 (KGEIEGKEEKKEGKGEIEGKEEKKEGKGEIEGKEEKKEV) is 3 X 13 AA tandem repeats of K-G-E-I-E-G-K-E-E-K-K-E-[GV]. Positions 98–138 (EGKEEKKEGKGEIEGKEEKKEGKGEIEGKEEKKEVENGPRK) are disordered.

In terms of tissue distribution, expressed in roots, leaves and flowers.

The protein resides in the mitochondrion membrane. In terms of biological role, involved in cytoplasmic male sterility (CMS) by leading to pollen abortion. Not expressed in fertile (normal) plants. This is an uncharacterized protein from Raphanus sativus (Radish).